A 343-amino-acid polypeptide reads, in one-letter code: ATP-dependent (S)-NAD(P)H-hydrate dehydratase (343 aa).

A mitochondrion-targeting transit peptide spans 1-42 (MAVHACGAAAAVVALLSAAIALQWSPLYAVLQRALSLHTAHA). Residues 49-340 (LFQLVRNIVP…TEVGTAFSRL (292 aa)) enclose the YjeF C-terminal domain. K63 bears the N6-acetyllysine mark. The residue at position 81 (Y81) is a Phosphotyrosine. Residues G149 and 202–208 (NHVEFSR) contribute to the (6S)-NADPHX site. S216 carries the phosphoserine modification. Residues 242-246 (KGEQD) and 261-270 (GSSRRCGGQG) each bind ATP. D271 is a binding site for (6S)-NADPHX.

Belongs to the NnrD/CARKD family. It depends on Mg(2+) as a cofactor.

It is found in the mitochondrion. It carries out the reaction (6S)-NADHX + ATP = ADP + phosphate + NADH + H(+). The enzyme catalyses (6S)-NADPHX + ATP = ADP + phosphate + NADPH + H(+). Functionally, catalyzes the dehydration of the S-form of NAD(P)HX at the expense of ATP, which is converted to ADP. Together with NAD(P)HX epimerase, which catalyzes the epimerization of the S- and R-forms, the enzyme allows the repair of both epimers of NAD(P)HX, a damaged form of NAD(P)H that is a result of enzymatic or heat-dependent hydration. The polypeptide is ATP-dependent (S)-NAD(P)H-hydrate dehydratase (Mus musculus (Mouse)).